The chain runs to 241 residues: Phosducin-like protein 2 (241 aa).

The Phosducin domain maps to 34–202 (VLRLQKEAMV…EWKLAEVGAI (169 aa)). The segment at 89 to 241 (FGELREISGN…DSSNSDNDTK (153 aa)) is thioredoxin fold.

The protein belongs to the phosducin family. As to quaternary structure, interacts with the CCT chaperonin complex and actin. In terms of tissue distribution, testis-specific.

It is found in the endoplasmic reticulum. Essential for male fertility, spermiogenesis and acrosome formation. The chain is Phosducin-like protein 2 (PDCL2) from Homo sapiens (Human).